The chain runs to 437 residues: D-aminoacyl-tRNA deacylase (437 aa).

The protein belongs to the DtdA deacylase family. As to quaternary structure, monomer. Requires Zn(2+) as cofactor.

The enzyme catalyses a D-aminoacyl-tRNA + H2O = a tRNA + a D-alpha-amino acid + H(+). It catalyses the reaction glycyl-tRNA(Ala) + H2O = tRNA(Ala) + glycine + H(+). Its function is as follows. D-aminoacyl-tRNA deacylase with broad substrate specificity. By recycling D-aminoacyl-tRNA to D-amino acids and free tRNA molecules, this enzyme counteracts the toxicity associated with the formation of D-aminoacyl-tRNA entities in vivo. The protein is D-aminoacyl-tRNA deacylase of Methanoculleus marisnigri (strain ATCC 35101 / DSM 1498 / JR1).